Reading from the N-terminus, the 213-residue chain is Protein DMP3 (213 aa).

The disordered stretch occupies residues 1–27; the sequence is MSSPSSLTQRNPTSSQEQSESVPQLRR. The next 4 membrane-spanning stretches (helical) occupy residues 45–65, 74–94, 136–156, and 176–196; these read LANLLPTGTLLAFTLLIPVFT, TQVLTIVLLTLLSISCFLSSF, IRIIDWIHAVLSVLVFGAVAL, and VLDIVPMGVGVICGMLFLVFP.

Belongs to the plant DMP1 protein family. In terms of tissue distribution, expressed in leaves, siliques and roots (e.g. root hairs).

The protein resides in the endoplasmic reticulum membrane. In terms of biological role, involved in membrane remodeling. This Arabidopsis thaliana (Mouse-ear cress) protein is Protein DMP3.